The primary structure comprises 360 residues: DNA replication and repair protein RecF (360 aa).

33–40 (GENGSGKT) is a binding site for ATP.

It belongs to the RecF family.

Its subcellular location is the cytoplasm. The RecF protein is involved in DNA metabolism; it is required for DNA replication and normal SOS inducibility. RecF binds preferentially to single-stranded, linear DNA. It also seems to bind ATP. In Rickettsia conorii (strain ATCC VR-613 / Malish 7), this protein is DNA replication and repair protein RecF.